Reading from the N-terminus, the 101-residue chain is Large ribosomal subunit protein eL30 (101 aa).

Belongs to the eukaryotic ribosomal protein eL30 family.

The sequence is that of Large ribosomal subunit protein eL30 from Pyrobaculum neutrophilum (strain DSM 2338 / JCM 9278 / NBRC 100436 / V24Sta) (Thermoproteus neutrophilus).